A 177-amino-acid polypeptide reads, in one-letter code: Protein FATTY ACID EXPORT 4, chloroplastic (177 aa).

Residues Met-1–Val-63 constitute a chloroplast transit peptide. The next 3 membrane-spanning stretches (helical) occupy residues Lys-85–Thr-105, Arg-111–Phe-131, and Val-140–Tyr-160.

This sequence belongs to the TMEM14 family.

It is found in the plastid. The protein localises to the chloroplast membrane. Its function is as follows. May be involved in free fatty acids export from the plastids. This is Protein FATTY ACID EXPORT 4, chloroplastic from Arabidopsis thaliana (Mouse-ear cress).